Reading from the N-terminus, the 366-residue chain is Transaldolase (366 aa).

The Schiff-base intermediate with substrate role is filled by lysine 140.

This sequence belongs to the transaldolase family. Type 2 subfamily.

It is found in the cytoplasm. It catalyses the reaction D-sedoheptulose 7-phosphate + D-glyceraldehyde 3-phosphate = D-erythrose 4-phosphate + beta-D-fructose 6-phosphate. It functions in the pathway carbohydrate degradation; pentose phosphate pathway; D-glyceraldehyde 3-phosphate and beta-D-fructose 6-phosphate from D-ribose 5-phosphate and D-xylulose 5-phosphate (non-oxidative stage): step 2/3. In terms of biological role, transaldolase is important for the balance of metabolites in the pentose-phosphate pathway. The polypeptide is Transaldolase (Saccharopolyspora erythraea (strain ATCC 11635 / DSM 40517 / JCM 4748 / NBRC 13426 / NCIMB 8594 / NRRL 2338)).